Here is a 553-residue protein sequence, read N- to C-terminus: MRSDMIKKGLERTPHRALLKATGIPQSQMERPFIGVATSFTDLIPGHVGMRDLERFIEKGIHSGGGYAQFFGIPGVCDGIAMGHKGMHYSLPTRELIADMVESVAEAHRLDGLVLLTNCDKITPGMLMAAARLNIPCIIVTAGPMMSGRGVEGRAYSFVTDTFEAMARYKAGVIDAKELQVCEDNACPGMGSCQGLFTANTMAILTETLGMSLPRCGTALAVSAMKRRIAFASGEKIVELVHNDVKPRDIMTRAAFENAIRVDLALGGSSNTVLHLLAIAREAGVDLPLETFDILAKETPQLASMNPAGKHFMEDLDIAGGVCGVLKQLGDKIIDTRTLFGLTTRQLAASIENVDQEVIRPLSAPVKKEGGIAVLFGSIAPKGAVVKQSGVSDKMMLFEGTARCFDSEELAMAALMEGVIKAGDVVVIRYEGPKGGPGMREMLAPTAALMGLGLGDSVALITDGRFSGGTRGPCIGHVSPEAAEGGPIALIQDGDRILLDIPNRKLDLLVDGATIEARRAQWTAPEPKIKTGWLARYAKVVTSAYTGAVTTAD.

Mg(2+) is bound at residue Asp-78. [2Fe-2S] cluster is bound at residue Cys-119. Residues Asp-120 and Lys-121 each coordinate Mg(2+). Residue Lys-121 is modified to N6-carboxylysine. Cys-193 lines the [2Fe-2S] cluster pocket. Glu-441 is a Mg(2+) binding site. The Proton acceptor role is filled by Ser-467.

It belongs to the IlvD/Edd family. Homodimer. The cofactor is [2Fe-2S] cluster. Mg(2+) serves as cofactor.

It catalyses the reaction (2R)-2,3-dihydroxy-3-methylbutanoate = 3-methyl-2-oxobutanoate + H2O. The enzyme catalyses (2R,3R)-2,3-dihydroxy-3-methylpentanoate = (S)-3-methyl-2-oxopentanoate + H2O. It participates in amino-acid biosynthesis; L-isoleucine biosynthesis; L-isoleucine from 2-oxobutanoate: step 3/4. Its pathway is amino-acid biosynthesis; L-valine biosynthesis; L-valine from pyruvate: step 3/4. Functions in the biosynthesis of branched-chain amino acids. Catalyzes the dehydration of (2R,3R)-2,3-dihydroxy-3-methylpentanoate (2,3-dihydroxy-3-methylvalerate) into 2-oxo-3-methylpentanoate (2-oxo-3-methylvalerate) and of (2R)-2,3-dihydroxy-3-methylbutanoate (2,3-dihydroxyisovalerate) into 2-oxo-3-methylbutanoate (2-oxoisovalerate), the penultimate precursor to L-isoleucine and L-valine, respectively. This Trichlorobacter lovleyi (strain ATCC BAA-1151 / DSM 17278 / SZ) (Geobacter lovleyi) protein is Dihydroxy-acid dehydratase.